A 564-amino-acid chain; its full sequence is Potassium-transporting ATPase potassium-binding subunit (564 aa).

10 consecutive transmembrane segments (helical) span residues 4 to 24 (HEIL…PFLG), 67 to 87 (TLAL…ILML), 135 to 155 (VGLT…LVAL), 179 to 199 (LYVL…QGVP), 258 to 278 (FEVA…GHYV), 286 to 306 (AILG…LWAE), 376 to 396 (IFGG…IAVF), 420 to 440 (LLVF…AIAA), 487 to 507 (LMIG…ILAI), and 528 to 548 (GPLF…LTFL).

Belongs to the KdpA family. As to quaternary structure, the system is composed of three essential subunits: KdpA, KdpB and KdpC.

It localises to the cell inner membrane. Its function is as follows. Part of the high-affinity ATP-driven potassium transport (or Kdp) system, which catalyzes the hydrolysis of ATP coupled with the electrogenic transport of potassium into the cytoplasm. This subunit binds the periplasmic potassium ions and delivers the ions to the membrane domain of KdpB through an intramembrane tunnel. The polypeptide is Potassium-transporting ATPase potassium-binding subunit (Pseudomonas aeruginosa (strain ATCC 15692 / DSM 22644 / CIP 104116 / JCM 14847 / LMG 12228 / 1C / PRS 101 / PAO1)).